The following is a 248-amino-acid chain: Triosephosphate isomerase (248 aa).

Residues Asn12 and Lys14 each contribute to the substrate site. The interval 16–30 (NGDRAGIDSIISFMK) is igE-binding. His95 functions as the Electrophile in the catalytic mechanism. Glu165 (proton acceptor) is an active-site residue. IgE-binding regions lie at residues 166–180 (PVWAIGTGKTATPEQ) and 205–219 (RIIYGGSVTPGNCKE).

This sequence belongs to the triosephosphate isomerase family. Homodimer. In terms of tissue distribution, expressed in skeletal muscle (at protein level).

The protein localises to the cytoplasm. The catalysed reaction is D-glyceraldehyde 3-phosphate = dihydroxyacetone phosphate. It carries out the reaction dihydroxyacetone phosphate = methylglyoxal + phosphate. It participates in carbohydrate biosynthesis; gluconeogenesis. It functions in the pathway carbohydrate degradation; glycolysis; D-glyceraldehyde 3-phosphate from glycerone phosphate: step 1/1. Functionally, triosephosphate isomerase is an extremely efficient metabolic enzyme that catalyzes the interconversion between dihydroxyacetone phosphate (DHAP) and D-glyceraldehyde-3-phosphate (G3P) in glycolysis and gluconeogenesis. In terms of biological role, it is also responsible for the non-negligible production of methylglyoxal a reactive cytotoxic side-product that modifies and can alter proteins, DNA and lipids. The chain is Triosephosphate isomerase from Procambarus clarkii (Red swamp crayfish).